The chain runs to 259 residues: Formate channel BtFdhC (259 aa).

At 1–26 (MAFHKPEQIAELVIEAGVQKVSQTLP) the chain is on the cytoplasmic side. Residues 27–47 (AMLILGFLGGAFISLGFLLNI) form a helical membrane-spanning segment. Over 48–66 (RVLGNLPERWGSLVNVLGG) the chain is Periplasmic. The helical transmembrane segment at 67 to 97 (AVFPVGLMLVVLAGGELITGNMMSLSMALYA) threads the bilayer. Topologically, residues 98–108 (KKITLVSVLNN) are cytoplasmic. Residues 109 to 130 (WVWITFMNFVGAIFVAYCFGHL) form a helical membrane-spanning segment. Residues 131–157 (GGLTEGDYLNKTVAIAEGKLHESFGRT) are Periplasmic-facing. Residues 158–176 (LILAIGCNWLVCLALWLAY) traverse the membrane as a helical segment. Over 177–187 (GTSDFVGKIIG) the chain is Cytoplasmic. Residues 188–216 (IWIPIMAFVVIGFQQVVANMFVISAVIFA) form a helical membrane-spanning segment. The Periplasmic segment spans residues 217–227 (GHLTWMDLARN). A helical transmembrane segment spans residues 228–250 (FVPVFIGNVIGGAGFVGFAYFAC). The Cytoplasmic portion of the chain corresponds to 251–259 (YQKQHSNMK).

It belongs to the FNT transporter (TC 1.A.16) family.

It is found in the cell inner membrane. It catalyses the reaction formate(in) = formate(out). Functionally, acts as a formate transporter. This is Formate channel BtFdhC from Bacillus thuringiensis.